A 195-amino-acid chain; its full sequence is uncharacterized protein (195 aa).

The helical transmembrane segment at 175-195 (ILGKISGFFGSIVSTIFSLFG) threads the bilayer.

It is found in the membrane. This is an uncharacterized protein from Methanocaldococcus jannaschii (strain ATCC 43067 / DSM 2661 / JAL-1 / JCM 10045 / NBRC 100440) (Methanococcus jannaschii).